Reading from the N-terminus, the 214-residue chain is MFLQSQKLWTMLLILAIWSPISHSLHFDLHSGRTKCIAEDIKSNSMTVGKYNIDNPHEGQALPQTHKISVKVTSNSGNNYHHAEQVDSGQFAFSAVEAGDYMACFTAVDHKPEVSLSIDFEWKTGVQSKSWANVAKKSQVEVMEFEVKSLLDTVNSIHEEMYYLRDREEEMQDLNRSTNTKMAWLSVLSFFVCIGVAGMQFLHLKTFFEKKKVI.

An N-terminal signal peptide occupies residues 1–24 (MFLQSQKLWTMLLILAIWSPISHS). Over 25–181 (LHFDLHSGRT…QDLNRSTNTK (157 aa)) the chain is Lumenal. Positions 34–149 (TKCIAEDIKS…VEVMEFEVKS (116 aa)) constitute a GOLD domain. Residues 164–177 (LRDREEEMQDLNRS) are a coiled coil. Arg-167 is modified (omega-N-methylated arginine). Asn-175 carries an N-linked (GlcNAc...) asparagine glycan. A helical transmembrane segment spans residues 182–202 (MAWLSVLSFFVCIGVAGMQFL). At 203-214 (HLKTFFEKKKVI) the chain is on the cytoplasmic side. Positions 207-208 (FF) match the COPII vesicle coat-binding motif. The COPI vesicle coat-binding motif lies at 207–214 (FFEKKKVI).

It belongs to the EMP24/GP25L family. In terms of assembly, probably oligomerizes with other members of the EMP24/GP25L family. Associates with the COPI vesicle coat (coatomer). Associates with the COPII vesicle coat (coatomer).

The protein resides in the endoplasmic reticulum membrane. Its subcellular location is the golgi apparatus. The protein localises to the cis-Golgi network membrane. It localises to the golgi stack membrane. In terms of biological role, involved in vesicular protein trafficking. Mainly functions in the early secretory pathway. Thought to act as cargo receptor at the lumenal side for incorporation of secretory cargo molecules into transport vesicles and to be involved in vesicle coat formation at the cytoplasmic side. This is Transmembrane emp24 domain-containing protein p24delta10 from Arabidopsis thaliana (Mouse-ear cress).